Here is a 451-residue protein sequence, read N- to C-terminus: NADP-specific glutamate dehydrogenase (451 aa).

K114 is an active-site residue.

Belongs to the Glu/Leu/Phe/Val dehydrogenases family. In terms of assembly, homohexamer.

The catalysed reaction is L-glutamate + NADP(+) + H2O = 2-oxoglutarate + NH4(+) + NADPH + H(+). This Fusarium fujikuroi (Bakanae and foot rot disease fungus) protein is NADP-specific glutamate dehydrogenase (GDH2).